The chain runs to 108 residues: UPF0145 protein Patl_2194 (108 aa).

The protein belongs to the UPF0145 family.

The polypeptide is UPF0145 protein Patl_2194 (Pseudoalteromonas atlantica (strain T6c / ATCC BAA-1087)).